A 225-amino-acid polypeptide reads, in one-letter code: C-reactive protein (225 aa).

A signal peptide spans 1–19 (MEKLLWCLLIMISFSRTFG). The region spanning 24–225 (FKKAFVFPKE…DVFIKPQLWS (202 aa)) is the Pentraxin (PTX) domain. Cysteine 55 and cysteine 116 are disulfide-bonded. Ca(2+) contacts are provided by asparagine 80, glutamate 157, glutamine 158, aspartate 159, and glutamine 169.

The protein belongs to the pentraxin family. Homopentamer. Pentraxin (or pentaxin) have a discoid arrangement of 5 non-covalently bound subunits. Interacts with FCN1; may regulate monocyte activation by FCN1. Ca(2+) serves as cofactor. Found in plasma.

It localises to the secreted. Displays several functions associated with host defense: it promotes agglutination, bacterial capsular swelling, phagocytosis and complement fixation through its calcium-dependent binding to phosphorylcholine. Can interact with DNA and histones and may scavenge nuclear material released from damaged circulating cells. The polypeptide is C-reactive protein (Crp) (Mus musculus (Mouse)).